Here is a 300-residue protein sequence, read N- to C-terminus: Small ribosomal subunit protein uS2 (300 aa).

Residues 228–300 (RAGLSADKDA…PAAEAPSTEA (73 aa)) form a disordered region. Low complexity predominate over residues 258-300 (AAPAAEAAPAAEAAPAAEAAPAAEAQAAPAAEAPAAEAPSTEA).

This sequence belongs to the universal ribosomal protein uS2 family.

This Rhodococcus jostii (strain RHA1) protein is Small ribosomal subunit protein uS2.